Consider the following 73-residue polypeptide: MVLGLALGLSIPLCLIVGAFVGYFVSMKVFKRQMRKNPPITEAQIRSLYAQMGRKPSEAQVKQMMRAYTKETK.

A helical transmembrane segment spans residues 5–25; sequence LALGLSIPLCLIVGAFVGYFV.

Belongs to the UPF0154 family.

The protein localises to the membrane. This Mycoplasmoides gallisepticum (strain R(low / passage 15 / clone 2)) (Mycoplasma gallisepticum) protein is UPF0154 protein MYCGA5700.